The chain runs to 395 residues: Protein-arginine rhamnosyltransferase (395 aa).

DTDP-beta-L-rhamnose is bound by residues 19-22, tyrosine 205, glutamine 272, and 288-292; these read NYGD and RGEDS. Aspartate 22 serves as the catalytic Proton acceptor. Residue glutamate 290 is part of the active site.

This sequence belongs to the glycosyltransferase 104 family.

The enzyme catalyses dTDP-beta-L-rhamnose + L-arginyl-[protein] = N(omega)-(alpha-L-rhamnosyl)-L-arginyl-[protein] + dTDP + H(+). Functionally, protein-arginine rhamnosyltransferase that catalyzes the transfer of a single rhamnose to elongation factor P (EF-P) on 'Lys-32', a modification required for EF-P-dependent rescue of polyproline stalled ribosomes. This is Protein-arginine rhamnosyltransferase from Shewanella oneidensis (strain ATCC 700550 / JCM 31522 / CIP 106686 / LMG 19005 / NCIMB 14063 / MR-1).